The primary structure comprises 51 residues: Large ribosomal subunit protein bL33 (51 aa).

The segment at 1-20 (MRDKIRLNSSAGTGHFYTTD) is disordered.

It belongs to the bacterial ribosomal protein bL33 family.

This Psychromonas ingrahamii (strain DSM 17664 / CCUG 51855 / 37) protein is Large ribosomal subunit protein bL33.